The primary structure comprises 166 residues: MNKEQKKNYISEMETQFQNNEAVMVTHYQGLTMSQLDELRAQMREHGIKFTITKNRITKIALEKTKCKELSNLFTGATAVAFSNDAIISARILSKFAKTNESLKLLGGIMGNEVLDQAAVQNVANLPTLDEARANLVGILATPASKLVSILLARSEKMSSLSPENS.

The protein belongs to the universal ribosomal protein uL10 family. Part of the ribosomal stalk of the 50S ribosomal subunit. The N-terminus interacts with L11 and the large rRNA to form the base of the stalk. The C-terminus forms an elongated spine to which L12 dimers bind in a sequential fashion forming a multimeric L10(L12)X complex.

Its function is as follows. Forms part of the ribosomal stalk, playing a central role in the interaction of the ribosome with GTP-bound translation factors. In Pelagibacter ubique (strain HTCC1062), this protein is Large ribosomal subunit protein uL10.